The following is a 549-amino-acid chain: Probable protein kinase UbiB (549 aa).

One can recognise a Protein kinase domain in the interval 123–501 (DFNETPLASA…QQQAHKSNYL (379 aa)). ATP is bound by residues 129-137 (LASASISQV) and Lys-152. Asp-287 functions as the Proton acceptor in the catalytic mechanism. 2 helical membrane-spanning segments follow: residues 498 to 518 (SNYL…LFNQ) and 520 to 540 (ATLL…IIGW).

Belongs to the ABC1 family. UbiB subfamily.

Its subcellular location is the cell inner membrane. It functions in the pathway cofactor biosynthesis; ubiquinone biosynthesis [regulation]. In terms of biological role, is probably a protein kinase regulator of UbiI activity which is involved in aerobic coenzyme Q (ubiquinone) biosynthesis. In Shewanella oneidensis (strain ATCC 700550 / JCM 31522 / CIP 106686 / LMG 19005 / NCIMB 14063 / MR-1), this protein is Probable protein kinase UbiB.